The chain runs to 599 residues: Vitamin B12-dependent ribonucleotide reductase (599 aa).

193-197 (PTGTI) contributes to the substrate binding site. The tract at residues 519 to 555 (LAQSAPRQAGPAKAATTAPAAKAQEPAAAPSPKQAHN) is disordered. The segment covering 526 to 553 (QAGPAKAATTAPAAKAQEPAAAPSPKQA) has biased composition (low complexity).

This sequence belongs to the ribonucleoside diphosphate reductase class-2 family. The cofactor is adenosylcob(III)alamin.

The catalysed reaction is a 2'-deoxyribonucleoside 5'-diphosphate + [thioredoxin]-disulfide + H2O = a ribonucleoside 5'-diphosphate + [thioredoxin]-dithiol. Its function is as follows. Catalyzes the reduction of ribonucleotides to deoxyribonucleotides. May function to provide a pool of deoxyribonucleotide precursors for DNA repair during oxygen limitation and/or for immediate growth after restoration of oxygen. This is Vitamin B12-dependent ribonucleotide reductase (nrdJ) from Streptantibioticus cattleyicolor (Streptomyces cattleya).